Consider the following 278-residue polypeptide: MQIMLCAISNIASGNCSEDCKYCTQSAHVKTDIQKYRRKELSQIVLEAKMAKKNEALGFCLVTAGLGLDDEKLEYVCEAAKAVQKEVPNLLLIACNGMASVEQLKELKKAGIFSYNHNLESSKEFFPQICTTHTWESRFQTNLNAKEAGLMLCCGGIYGMGESEEDRLSFRKSLQELQPFSTPINFFIANENLKLQVPRLSADEALKIVRDTKEALPQSVVMVAGGREVVLRERQYEIFQAGAGAIVIGDYLTTKGEEPSQDIIKLKEMGFTFASECH.

The Radical SAM core domain occupies 1-227 (MQIMLCAISN…QSVVMVAGGR (227 aa)). 3 residues coordinate [4Fe-4S] cluster: cysteine 16, cysteine 20, and cysteine 23. Residues cysteine 60, asparagine 96, and cysteine 154 each contribute to the [2Fe-2S] cluster site.

The protein belongs to the radical SAM superfamily. Biotin synthase family. As to quaternary structure, homodimer. [4Fe-4S] cluster is required as a cofactor. It depends on [2Fe-2S] cluster as a cofactor.

It carries out the reaction (4R,5S)-dethiobiotin + (sulfur carrier)-SH + 2 reduced [2Fe-2S]-[ferredoxin] + 2 S-adenosyl-L-methionine = (sulfur carrier)-H + biotin + 2 5'-deoxyadenosine + 2 L-methionine + 2 oxidized [2Fe-2S]-[ferredoxin]. Its pathway is cofactor biosynthesis; biotin biosynthesis; biotin from 7,8-diaminononanoate: step 2/2. Catalyzes the conversion of dethiobiotin (DTB) to biotin by the insertion of a sulfur atom into dethiobiotin via a radical-based mechanism. The polypeptide is Biotin synthase (Campylobacter jejuni subsp. jejuni serotype O:2 (strain ATCC 700819 / NCTC 11168)).